Reading from the N-terminus, the 221-residue chain is Ktr system potassium uptake protein C (221 aa).

In terms of domain architecture, RCK N-terminal spans 2 to 118 (KKEFAVIGLG…LSKIGADHIV (117 aa)). NAD(+) contacts are provided by residues Arg-12, 32–34 (DID), 52–53 (DS), 74–76 (IGE), 99–101 (KAQ), His-105, and Glu-121. Positions 135 to 219 (NNVLDYLELS…ISRFEKRVLH (85 aa)) constitute an RCK C-terminal domain.

It belongs to the KtrA potassium transport family. As to quaternary structure, homodimer, tetramer (dimer of homodimer) and octamer (tetramer of homodimer). Part of the KtrCD complex formed by an octameric catalytic ring of KtrC and a membrane associated dimer of KtrD forming a potassium channel.

It is found in the cell membrane. Catalytic subunit of the KtrCD potassium uptake transporter. The 2 major potassium transporter complexes KtrAB and KtrCD confer resistance to both suddenly imposed and prolonged osmotic stress. This Bacillus subtilis (strain 168) protein is Ktr system potassium uptake protein C (ktrC).